We begin with the raw amino-acid sequence, 311 residues long: Thioredoxin reductase (311 aa).

FAD-binding positions include 15-18, 37-44, asparagine 53, and valine 86; these read SGPA and EGTQFGGA. A disulfide bridge links cysteine 137 with cysteine 140. Serine 158, histidine 177, arginine 183, isoleucine 240, and tyrosine 260 together coordinate NADP(+). Residues aspartate 280 and 287–290 each bind FAD; that span reads RQAI. Position 287 (arginine 287) interacts with NADP(+).

Belongs to the class-II pyridine nucleotide-disulfide oxidoreductase family. Homodimer. It depends on FAD as a cofactor.

Its subcellular location is the cytoplasm. The catalysed reaction is [thioredoxin]-dithiol + NADP(+) = [thioredoxin]-disulfide + NADPH + H(+). The chain is Thioredoxin reductase from Mycolicibacterium smegmatis (Mycobacterium smegmatis).